The following is a 361-amino-acid chain: Phosphoserine aminotransferase (361 aa).

Arg43 serves as a coordination point for L-glutamate. Pyridoxal 5'-phosphate-binding positions include 77–78 (AS), Trp103, Thr153, Asp173, and Gln196. Lys197 carries the post-translational modification N6-(pyridoxal phosphate)lysine. 238–239 (NT) contributes to the pyridoxal 5'-phosphate binding site.

The protein belongs to the class-V pyridoxal-phosphate-dependent aminotransferase family. SerC subfamily. In terms of assembly, homodimer. Pyridoxal 5'-phosphate is required as a cofactor.

Its subcellular location is the cytoplasm. It catalyses the reaction O-phospho-L-serine + 2-oxoglutarate = 3-phosphooxypyruvate + L-glutamate. It carries out the reaction 4-(phosphooxy)-L-threonine + 2-oxoglutarate = (R)-3-hydroxy-2-oxo-4-phosphooxybutanoate + L-glutamate. It functions in the pathway amino-acid biosynthesis; L-serine biosynthesis; L-serine from 3-phospho-D-glycerate: step 2/3. It participates in cofactor biosynthesis; pyridoxine 5'-phosphate biosynthesis; pyridoxine 5'-phosphate from D-erythrose 4-phosphate: step 3/5. Catalyzes the reversible conversion of 3-phosphohydroxypyruvate to phosphoserine and of 3-hydroxy-2-oxo-4-phosphonooxybutanoate to phosphohydroxythreonine. The sequence is that of Phosphoserine aminotransferase from Pseudomonas syringae pv. syringae (strain B728a).